Here is an 834-residue protein sequence, read N- to C-terminus: MKLCGVRGSGVSLMRSSNFPCFRAAHNGGAPTATRHQSLCGRCLDSHMGAGKRWCFRPLLAEPRRYGSASSASTTDAATAPVHGEDLYVSHYAIPEDARRLVGTPQLLPRNPAEEVAFKKNLIRSFPQACIRNVSVVAHVDHGKTTLSDAMLRFSNLLPADGATGTFTDRLKVEKERGITIKAQTCSVLLTVRETGTQYLVNLIDTPGHVDFQYEVSRSLCASEGAALLVDVRQGVEAQTMAQFYAALEQNLTILPVLTKMDNVMSDAEVEKTLLQLEDSTGLLSREVILTSAKSKQGIEQLFQQIIDKVPPPRGREGFSDMKQLPAMHPDSADRKKVEKELVPLRALLFDCWTSESSGMTDGAASAPVSTVSSVSSGTTAASGGQSVAKDGIYGLIRVMDGTVTPGTTVTFFHSGKKHEVREVGIIHPTLHPTAALTAGMVGFVFFPGLLKKDVFIGDTLCTLPTRKHTMRVVATGPPETASRTKPATAAETASSDDASGSSGSSVVEPIPGFKTVQPVVFAGFYPDEGVYITQLREAVDLLCVNDPSVTVEQLQCPALGPGLQLGFLGFLHMQVFKERLLMEFGQTVLVTPPQVQYMYVEQHGDPDDPAQRKPVSVSNWRWPHEGVGAYLEPFITATVLTPSEYLNEINSAALSAFRGEMQEMRVIDGARTLVRYRMPLADLARGFFSTVKSSSHGYATLEYDDPTYMTADLVKMDIVINKAHISALSTICLRHEATTHARRIIGSLKENLLRSSVDLPLQALVGSKIIARETVKAYRKDVTAKIHAGDISRKQKKWNDQKKGKERMARRSVGTVTLDQSVLAAALGATTAR.

The N-terminal 66 residues, 1–66 (MKLCGVRGSG…RPLLAEPRRY (66 aa)), are a transit peptide targeting the mitochondrion. In terms of domain architecture, tr-type G spans 129 to 314 (ACIRNVSVVA…QIIDKVPPPR (186 aa)). GTP contacts are provided by residues 138–145 (AHVDHGKT), 205–209 (DTPGH), and 259–262 (TKMD). The interval 475-507 (ATGPPETASRTKPATAAETASSDDASGSSGSSV) is disordered. The span at 488 to 507 (ATAAETASSDDASGSSGSSV) shows a compositional bias: low complexity.

The protein belongs to the TRAFAC class translation factor GTPase superfamily. Classic translation factor GTPase family. LepA subfamily.

The protein resides in the mitochondrion inner membrane. The catalysed reaction is GTP + H2O = GDP + phosphate + H(+). In terms of biological role, promotes mitochondrial protein synthesis. May act as a fidelity factor of the translation reaction, by catalyzing a one-codon backward translocation of tRNAs on improperly translocated ribosomes. Binds to mitochondrial ribosomes in a GTP-dependent manner. This chain is Translation factor GUF1 homolog, mitochondrial, found in Leishmania major.